Reading from the N-terminus, the 44-residue chain is Antibacterial protein 3 (44 aa).

Met1 bears the N-formylmethionine mark.

The protein belongs to the staphylococcal hemolytic protein family.

Its subcellular location is the secreted. Has hemolytic activity and also inhibits the growth of gonococci. This chain is Antibacterial protein 3, found in Staphylococcus haemolyticus.